We begin with the raw amino-acid sequence, 146 residues long: Angiogenin (146 aa).

A signal peptide spans Met-1–Ala-24. A Pyrrolidone carboxylic acid modification is found at Gln-25. The active-site Proton acceptor is the His-37. TRNA is bound at residue Arg-45. 3 disulfide bridges follow: Cys-50–Cys-105, Cys-63–Cys-116, and Cys-81–Cys-131. The short motif at Arg-55–Leu-59 is the Nucleolar localization signal element. TRNA is bound by residues Cys-105 and Ile-127. The Proton donor role is filled by His-138.

This sequence belongs to the pancreatic ribonuclease family. As to quaternary structure, homodimer. Interacts with RNH1; inhibiting ANG ribonuclease activity. Interacts with PCNA.

It localises to the secreted. The protein resides in the nucleus. Its subcellular location is the nucleolus. The protein localises to the cytoplasm. It is found in the stress granule. Has weak tRNA ribonuclease activity by itself due to partial autoinhibition by its C-terminus, which folds into a short alpha-helix that partially occludes the substrate-binding site. In absence of stress, the ribonuclease activity is inhibited by RNH1 in the cytoplasm. In response to stress, dissociates from RNH1 in the cytoplasm and associates with cytoplasmic ribosomes with vacant A-sites: ribosomes directly activate the tRNA ribonuclease activity of ANG by refolding the C-terminal alpha-helix. In response to stress, the angiogenic activity of ANG is inhibited by RNH1 in the nucleus. Functionally, secreted ribonuclease that can either promote or restrict cell proliferation of target cells, depending on the context. Endocytosed in target cells via its receptor PLXNB2 and translocates to the cytoplasm or nucleus. Under stress conditions, localizes to the cytoplasm and promotes the assembly of stress granules (SGs): specifically cleaves a subset of tRNAs within anticodon loops to produce tRNA-derived stress-induced fragments (tiRNAs), resulting in translation repression and inhibition of cell proliferation. tiRNas also prevent formation of apoptosome, thereby promoting cell survival. Preferentially cleaves RNAs between a pyrimidine and an adenosine residue, suggesting that it cleaves the anticodon loop of tRNA(Ala) (32-UUAGCAU-38) after positions 33 and 36. Cleaves a subset of tRNAs, including tRNA(Ala), tRNA(Glu), tRNA(Gly), tRNA(Lys), tRNA(Val), tRNA(His), tRNA(Asp) and tRNA(Sec). Under growth conditions and in differentiated cells, translocates to the nucleus and stimulates ribosomal RNA (rRNA) transcription, including that containing the initiation site sequences of 45S rRNA, thereby promoting cell growth and proliferation. Angiogenin induces vascularization of normal and malignant tissues via its ability to promote rRNA transcription. Involved in hematopoietic stem and progenitor cell (HSPC) growth and survival by promoting rRNA transcription in growth conditions and inhibiting translation in response to stress, respectively. Mediates the crosstalk between myeloid and intestinal epithelial cells to protect the intestinal epithelial barrier integrity: secreted by myeloid cells and promotes intestinal epithelial cells proliferation and survival. Also mediates osteoclast-endothelial cell crosstalk in growing bone: produced by osteoclasts and protects the neighboring vascular cells against senescence by promoting rRNA transcription. In Papio hamadryas (Hamadryas baboon), this protein is Angiogenin (ANG).